The primary structure comprises 299 residues: 4-hydroxybenzoate octaprenyltransferase (299 aa).

8 helical membrane passes run 33 to 53 (VGFLLLLWPTWWALWLAADGV), 56 to 76 (WWTLCVFTTGIWLTRSAGCVI), 107 to 127 (LLMFATLMLIAFGLVLTMNQL), 151 to 171 (LPQVYLGLAFGWGIPMAFAAI), 180 to 200 (WLLYIANILWTTAYDTWYAMV), 213 to 233 (IAILFAELDLVVQGVLYTLML), 247 to 267 (HTYWISLISAVALIGYQFIIA), and 278 to 298 (AFMHNNWVGMTIFAGIALATT).

It belongs to the UbiA prenyltransferase family. The cofactor is Mg(2+).

It localises to the cell inner membrane. The enzyme catalyses all-trans-octaprenyl diphosphate + 4-hydroxybenzoate = 4-hydroxy-3-(all-trans-octaprenyl)benzoate + diphosphate. Its pathway is cofactor biosynthesis; ubiquinone biosynthesis. Its function is as follows. Catalyzes the prenylation of para-hydroxybenzoate (PHB) with an all-trans polyprenyl group. Mediates the second step in the final reaction sequence of ubiquinone-8 (UQ-8) biosynthesis, which is the condensation of the polyisoprenoid side chain with PHB, generating the first membrane-bound Q intermediate 3-octaprenyl-4-hydroxybenzoate. This is 4-hydroxybenzoate octaprenyltransferase from Xylella fastidiosa (strain M12).